Consider the following 259-residue polypeptide: Acyl-[acyl-carrier-protein]--UDP-N-acetylglucosamine O-acyltransferase (259 aa).

It belongs to the transferase hexapeptide repeat family. LpxA subfamily. As to quaternary structure, homotrimer.

Its subcellular location is the cytoplasm. The enzyme catalyses a (3R)-hydroxyacyl-[ACP] + UDP-N-acetyl-alpha-D-glucosamine = a UDP-3-O-[(3R)-3-hydroxyacyl]-N-acetyl-alpha-D-glucosamine + holo-[ACP]. It participates in glycolipid biosynthesis; lipid IV(A) biosynthesis; lipid IV(A) from (3R)-3-hydroxytetradecanoyl-[acyl-carrier-protein] and UDP-N-acetyl-alpha-D-glucosamine: step 1/6. In terms of biological role, involved in the biosynthesis of lipid A, a phosphorylated glycolipid that anchors the lipopolysaccharide to the outer membrane of the cell. The polypeptide is Acyl-[acyl-carrier-protein]--UDP-N-acetylglucosamine O-acyltransferase (Psychrobacter sp. (strain PRwf-1)).